Here is a 269-residue protein sequence, read N- to C-terminus: Achromobactin transport ATP-binding protein CbrD (269 aa).

The ABC transporter domain maps to 4–240 (ITSRELTLGY…ALVKTVFNLD (237 aa)). 36–43 (GSNGCGKS) contacts ATP.

Belongs to the ABC transporter superfamily.

It is found in the cell inner membrane. Part of the binding-protein-dependent transport system CbrABCD for uptake of the siderophore achromobactin. Probably responsible for energy coupling to the transport system. This is Achromobactin transport ATP-binding protein CbrD (cbrD) from Dickeya dadantii (strain 3937) (Erwinia chrysanthemi (strain 3937)).